The following is a 227-amino-acid chain: Phosphoribosylformylglycinamidine synthase subunit PurQ (227 aa).

The Glutamine amidotransferase type-1 domain occupies 3 to 225; it reads FAVIVFPGSN…LKYWRETYVV (223 aa). Cysteine 86 functions as the Nucleophile in the catalytic mechanism. Catalysis depends on residues histidine 194 and glutamate 196.

In terms of assembly, part of the FGAM synthase complex composed of 1 PurL, 1 PurQ and 2 PurS subunits.

It localises to the cytoplasm. The catalysed reaction is N(2)-formyl-N(1)-(5-phospho-beta-D-ribosyl)glycinamide + L-glutamine + ATP + H2O = 2-formamido-N(1)-(5-O-phospho-beta-D-ribosyl)acetamidine + L-glutamate + ADP + phosphate + H(+). It carries out the reaction L-glutamine + H2O = L-glutamate + NH4(+). It participates in purine metabolism; IMP biosynthesis via de novo pathway; 5-amino-1-(5-phospho-D-ribosyl)imidazole from N(2)-formyl-N(1)-(5-phospho-D-ribosyl)glycinamide: step 1/2. Functionally, part of the phosphoribosylformylglycinamidine synthase complex involved in the purines biosynthetic pathway. Catalyzes the ATP-dependent conversion of formylglycinamide ribonucleotide (FGAR) and glutamine to yield formylglycinamidine ribonucleotide (FGAM) and glutamate. The FGAM synthase complex is composed of three subunits. PurQ produces an ammonia molecule by converting glutamine to glutamate. PurL transfers the ammonia molecule to FGAR to form FGAM in an ATP-dependent manner. PurS interacts with PurQ and PurL and is thought to assist in the transfer of the ammonia molecule from PurQ to PurL. In Bacillus cytotoxicus (strain DSM 22905 / CIP 110041 / 391-98 / NVH 391-98), this protein is Phosphoribosylformylglycinamidine synthase subunit PurQ.